Here is a 209-residue protein sequence, read N- to C-terminus: Outer-membrane lipoprotein carrier protein (209 aa).

The N-terminal stretch at 1–21 (MKLLKLLSVAALSAASMMANA) is a signal peptide.

The protein belongs to the LolA family. As to quaternary structure, monomer.

It localises to the periplasm. Participates in the translocation of lipoproteins from the inner membrane to the outer membrane. Only forms a complex with a lipoprotein if the residue after the N-terminal Cys is not an aspartate (The Asp acts as a targeting signal to indicate that the lipoprotein should stay in the inner membrane). This chain is Outer-membrane lipoprotein carrier protein, found in Hahella chejuensis (strain KCTC 2396).